Here is a 245-residue protein sequence, read N- to C-terminus: tRNA (guanine-N(1)-)-methyltransferase (245 aa).

S-adenosyl-L-methionine is bound by residues Gly112 and 132–137; that span reads IGDFVL.

Belongs to the RNA methyltransferase TrmD family. As to quaternary structure, homodimer.

The protein localises to the cytoplasm. It catalyses the reaction guanosine(37) in tRNA + S-adenosyl-L-methionine = N(1)-methylguanosine(37) in tRNA + S-adenosyl-L-homocysteine + H(+). Functionally, specifically methylates guanosine-37 in various tRNAs. This is tRNA (guanine-N(1)-)-methyltransferase from Geobacter metallireducens (strain ATCC 53774 / DSM 7210 / GS-15).